The chain runs to 156 residues: Cell division protein SepF (156 aa).

Residues 15–58 (SDVVPEDEDDEVIDEEPESSFDTDRSVTPIPAASTQPSTSQRKS) are disordered. Acidic residues predominate over residues 18–35 (VPEDEDDEVIDEEPESSF). Residues 47-57 (ASTQPSTSQRK) show a composition bias toward polar residues.

This sequence belongs to the SepF family. In terms of assembly, homodimer. Interacts with FtsZ.

Its subcellular location is the cytoplasm. In terms of biological role, cell division protein that is part of the divisome complex and is recruited early to the Z-ring. Probably stimulates Z-ring formation, perhaps through the cross-linking of FtsZ protofilaments. Its function overlaps with FtsA. In Bifidobacterium animalis subsp. lactis (strain AD011), this protein is Cell division protein SepF.